Consider the following 356-residue polypeptide: Phosphoribosyl pyrophosphate synthase-associated protein 1 (356 aa).

An N-acetylmethionine modification is found at M1. S177 and S215 each carry phosphoserine.

Belongs to the ribose-phosphate pyrophosphokinase family. In terms of assembly, binds to PRPS1 and PRPS2.

Seems to play a negative regulatory role in 5-phosphoribose 1-diphosphate synthesis. The sequence is that of Phosphoribosyl pyrophosphate synthase-associated protein 1 (Prpsap1) from Mus musculus (Mouse).